A 1075-amino-acid polypeptide reads, in one-letter code: MLRNGNEGMSTIPGFSQIQFEGFCRFINQGLAEELEKFPTIKDPDHEIAFQLFAKGYQLLEPSIKERNAVYESLTYSSELYVSARLIFGFDVQKQTISIGNIPIMNSLGTFIINGIYRIVINQILLSPGIYYRSELDHKGISICTGTIISDWGGRSELAIDKKERIWARVSRKQKISILVLSSAMGSNLREILDNVSYPEIFLSFPNAKEKKRIESKEKAILEFYQQFACVGGDLVFSESLCEELQKKFFQQKCELGRVGRRNMNRRLNLDIPQNNTFLLPRDVLAATDHLIGMKFGTGILDDDDMNHLKNKRIRSVADLLQDQFGLALGRLQHAVQKTIRRVFIRQSKPTPQTLVTPTSTSILLITTYETFFGTYPLAQVFDQTNPLTQTVHGRKVSCLGPGGLTGRTASFRSRDIHPSHYGRICPIDTSEGINVGLTGSLAIHARIDHWWGSIESPFYEISEKAKEKKERQVVYLSPNRDEYYMIAAGNSLSLNQGIQEEQVVPARYRQEFLTIAWEQIHVRSIFPFQYFSIGGSLIPFIEHNDANRALMSSNMQRQAVPLSRSEKCIVGTGLERQTALDSRVSVIAEREGKIISSDSHKILLSSSGKTISIPLVAHRRSNKNTCMHQKPRVPRGKSIKKGQILAEGAATVGGELALGKNVLVAYMPWEGYNFEDAVLISERLVYEDIYTSFHIRKYEIQTDTTSQGSAEKITKQIPHLEEHLLRNLDRNGVVRLGSWVETGDILVGKLTPQIASESSYIAEAGLLRAIFGLEVSTSKETSLKLPIGGRGRVIDVKWIQRDPFDIMVRVYILQKREIKVGDKVAGRHGNKGIISKILPRQDMPYLQDGTPVDMVFNPLGVPSRMNVGQIFESSLGLAGDLLKKHYRIAPFDERYEQEASRKLVFSELYEASKQTKNPWVFEPEYPGKSRIFDGRTGDPFEQPVLIGKSYILKLIHQVDEKIHGRSTGPYSLVTQQPVRGRAKQGGQRIGEMEVWALEGFGVAHILQEILTYKSDHLIARQEILNATIWGKRVPNHEDPPESFRVLVRELRSLALELNHFLVSEKNFRVNREDV.

Belongs to the RNA polymerase beta chain family. In plastids the minimal PEP RNA polymerase catalytic core is composed of four subunits: alpha, beta, beta', and beta''. When a (nuclear-encoded) sigma factor is associated with the core the holoenzyme is formed, which can initiate transcription.

It is found in the plastid. It localises to the chloroplast. The catalysed reaction is RNA(n) + a ribonucleoside 5'-triphosphate = RNA(n+1) + diphosphate. Functionally, DNA-dependent RNA polymerase catalyzes the transcription of DNA into RNA using the four ribonucleoside triphosphates as substrates. The chain is DNA-directed RNA polymerase subunit beta from Saccharum officinarum (Sugarcane).